We begin with the raw amino-acid sequence, 149 residues long: Arginine repressor (149 aa).

The protein belongs to the ArgR family.

Its subcellular location is the cytoplasm. The protein operates within amino-acid biosynthesis; L-arginine biosynthesis [regulation]. Its function is as follows. Regulates arginine biosynthesis genes. In Oceanobacillus iheyensis (strain DSM 14371 / CIP 107618 / JCM 11309 / KCTC 3954 / HTE831), this protein is Arginine repressor.